The chain runs to 399 residues: uncharacterized protein (399 aa).

It belongs to the TelA family.

This is an uncharacterized protein from Listeria monocytogenes serovar 1/2a (strain ATCC BAA-679 / EGD-e).